The chain runs to 450 residues: Aspartyl/glutamyl-tRNA(Asn/Gln) amidotransferase subunit B (450 aa).

Belongs to the GatB/GatE family. GatB subfamily. In terms of assembly, heterotrimer of A, B and C subunits.

The enzyme catalyses L-glutamyl-tRNA(Gln) + L-glutamine + ATP + H2O = L-glutaminyl-tRNA(Gln) + L-glutamate + ADP + phosphate + H(+). It catalyses the reaction L-aspartyl-tRNA(Asn) + L-glutamine + ATP + H2O = L-asparaginyl-tRNA(Asn) + L-glutamate + ADP + phosphate + 2 H(+). In terms of biological role, allows the formation of correctly charged Asn-tRNA(Asn) or Gln-tRNA(Gln) through the transamidation of misacylated Asp-tRNA(Asn) or Glu-tRNA(Gln) in organisms which lack either or both of asparaginyl-tRNA or glutaminyl-tRNA synthetases. The reaction takes place in the presence of glutamine and ATP through an activated phospho-Asp-tRNA(Asn) or phospho-Glu-tRNA(Gln). This chain is Aspartyl/glutamyl-tRNA(Asn/Gln) amidotransferase subunit B, found in Methanobrevibacter smithii (strain ATCC 35061 / DSM 861 / OCM 144 / PS).